Here is a 400-residue protein sequence, read N- to C-terminus: MKFVDEVQIRVDAGDGGNGCVSFRREKYIPNGGPDGGDGGDGGDVYLIADENLNTLIDYRFERFHAAERGENGQSANCTGRRGKDRILRVPVGTRASDEDTGELLGDLTHHGQKLLVAKGGFHGLGNTRFKSSVNRAPRQKSSGTPGEVRTLKLELLLLADVGMLGLPNAGKSTFIRAVSAARPKVADYPFTTLVPNLGVVRGENSRSFVIADIPGLIEGAAEGAGLGIRFLKHLERCRVLIHLVDICPVDDSDPAENAVTIVKELEKYSPELAGKPRWLVFNKMDLILEEEAVEVMERVKTALAYEGPVYQISAISKEGTKKVCYDILDLLDTMPRQLAEDARDAIEKVEFKWDDYHKNQLAQAEAEALAASMAFDEGLDEEDWDDDEDDGVEVIYVRD.

An Obg domain is found at 1-159 (MKFVDEVQIR…RTLKLELLLL (159 aa)). Positions 160 to 333 (ADVGMLGLPN…VCYDILDLLD (174 aa)) constitute an OBG-type G domain. GTP is bound by residues 166-173 (GLPNAGKS), 191-195 (FTTLV), 213-216 (DIPG), 283-286 (NKMD), and 314-316 (SAI). Positions 173 and 193 each coordinate Mg(2+).

Belongs to the TRAFAC class OBG-HflX-like GTPase superfamily. OBG GTPase family. As to quaternary structure, monomer. Mg(2+) is required as a cofactor.

The protein localises to the cytoplasm. An essential GTPase which binds GTP, GDP and possibly (p)ppGpp with moderate affinity, with high nucleotide exchange rates and a fairly low GTP hydrolysis rate. Plays a role in control of the cell cycle, stress response, ribosome biogenesis and in those bacteria that undergo differentiation, in morphogenesis control. The sequence is that of GTPase Obg from Aeromonas salmonicida (strain A449).